The following is a 291-amino-acid chain: Undecaprenyl-diphosphatase (291 aa).

Transmembrane regions (helical) follow at residues 1–21 (MFIIELIKGIILGVVEGLTEF), 48–68 (SAFTFKIVIQLGSVFAAAWVF), 102–122 (LHVLVGMVPAGILGLLFDDFI), 126–146 (LFSVPTVMIGLFVGAIYMIIA), 162–182 (INYFQAFVIGISQAVAMWPGF), 203–223 (SDFTFIMAVPIMLAASGLSLL), 231–251 (IADIPFYILGFLAAFTVGLIA), and 267–287 (FAIYRIVLVIFIAILYFGFGI).

It belongs to the UppP family.

The protein localises to the cell membrane. It carries out the reaction di-trans,octa-cis-undecaprenyl diphosphate + H2O = di-trans,octa-cis-undecaprenyl phosphate + phosphate + H(+). In terms of biological role, catalyzes the dephosphorylation of undecaprenyl diphosphate (UPP). Confers resistance to bacitracin. The sequence is that of Undecaprenyl-diphosphatase from Staphylococcus aureus (strain bovine RF122 / ET3-1).